Here is a 248-residue protein sequence, read N- to C-terminus: Granzyme-like protein 1 (248 aa).

Positions 1–18 are cleaved as a signal peptide; the sequence is MNLLLLLLTVSLAPTTEA. A propeptide spans 19–20 (activation peptide); sequence AE. A Peptidase S1 domain is found at 21 to 246; that stretch reads IIGGHEADPH…FLSWIEETMK (226 aa). Cysteine 50 and cysteine 66 are joined by a disulfide. Residue histidine 65 is the Charge relay system of the active site. The N-linked (GlcNAc...) asparagine glycan is linked to asparagine 72. Aspartate 109 acts as the Charge relay system in catalysis. Disulfide bonds link cysteine 143–cysteine 210 and cysteine 174–cysteine 189. The active-site Charge relay system is serine 204.

It belongs to the peptidase S1 family. Granzyme subfamily. Duodenum.

Functionally, this enzyme is necessary for target cell lysis in cell-mediated immune responses. This is Granzyme-like protein 1 from Rattus norvegicus (Rat).